Reading from the N-terminus, the 402-residue chain is Acetate kinase (402 aa).

N10 provides a ligand contact to Mg(2+). K17 is a binding site for ATP. Substrate is bound at residue R89. The active-site Proton donor/acceptor is the D148. Residues 208–212 (HLGNG), 283–285 (DCR), and 334–338 (GIGEN) each bind ATP. Residue E389 participates in Mg(2+) binding.

The protein belongs to the acetokinase family. In terms of assembly, homodimer. Requires Mg(2+) as cofactor. Mn(2+) serves as cofactor.

The protein localises to the cytoplasm. The enzyme catalyses acetate + ATP = acetyl phosphate + ADP. Its pathway is metabolic intermediate biosynthesis; acetyl-CoA biosynthesis; acetyl-CoA from acetate: step 1/2. Its function is as follows. Catalyzes the formation of acetyl phosphate from acetate and ATP. Can also catalyze the reverse reaction. The chain is Acetate kinase from Actinobacillus pleuropneumoniae serotype 5b (strain L20).